Here is a 258-residue protein sequence, read N- to C-terminus: Dehydrodolichyl diphosphate synthase complex subunit nus1 (258 aa).

The chain crosses the membrane as a helical span at residues I5–W21.

Belongs to the UPP synthase family. In terms of assembly, forms an active dehydrodolichyl diphosphate synthase complex with SPAC4D7.04c. It depends on Mg(2+) as a cofactor.

It is found in the endoplasmic reticulum membrane. The catalysed reaction is n isopentenyl diphosphate + (2E,6E)-farnesyl diphosphate = a di-trans,poly-cis-polyprenyl diphosphate + n diphosphate. It participates in protein modification; protein glycosylation. With SPAC4D7.04c, forms the dehydrodolichyl diphosphate synthase (DDS) complex, an essential component of the dolichol monophosphate (Dol-P) biosynthetic machinery. Adds multiple copies of isopentenyl pyrophosphate (IPP) to farnesyl pyrophosphate (FPP) to produce dehydrodolichyl diphosphate (Dedol-PP), a precursor of dolichol which is utilized as a sugar carrier in protein glycosylation in the endoplasmic reticulum (ER). This Schizosaccharomyces pombe (strain 972 / ATCC 24843) (Fission yeast) protein is Dehydrodolichyl diphosphate synthase complex subunit nus1 (nus1).